The chain runs to 288 residues: Shikimate dehydrogenase (NADP(+)) (288 aa).

Shikimate contacts are provided by residues 14 to 16 and Thr63; that span reads SIS. Lys67 (proton acceptor) is an active-site residue. An NADP(+)-binding site is contributed by Glu79. Asn88 and Asp103 together coordinate shikimate. Residues 127–131, 151–156, and Met219 contribute to the NADP(+) site; these read GSGGA and NRTYEK. A shikimate-binding site is contributed by Tyr221. Residue Gly242 participates in NADP(+) binding.

Belongs to the shikimate dehydrogenase family. As to quaternary structure, homodimer.

It catalyses the reaction shikimate + NADP(+) = 3-dehydroshikimate + NADPH + H(+). It functions in the pathway metabolic intermediate biosynthesis; chorismate biosynthesis; chorismate from D-erythrose 4-phosphate and phosphoenolpyruvate: step 4/7. In terms of biological role, involved in the biosynthesis of the chorismate, which leads to the biosynthesis of aromatic amino acids. Catalyzes the reversible NADPH linked reduction of 3-dehydroshikimate (DHSA) to yield shikimate (SA). This Caldicellulosiruptor bescii (strain ATCC BAA-1888 / DSM 6725 / KCTC 15123 / Z-1320) (Anaerocellum thermophilum) protein is Shikimate dehydrogenase (NADP(+)).